The primary structure comprises 1043 residues: Constitutive coactivator of PPAR-gamma-like protein 1 homolog (1043 aa).

2 disordered regions span residues 353-497 and 929-1043; these read SMVP…HMQI and YGRG…NKEE. Composition is skewed to polar residues over residues 362–375 and 405–419; these read QMLNIPQGSVQSRP and SPINPAQSGSPNHVD. Basic and acidic residues-rich tracts occupy residues 451–471 and 951–964; these read TWDKGKKSEKANKKDSTEQAK and EVAKELKTQSEDSK. The interval 801 to 1043 is RNA binding; the sequence is VELATKVEKM…LEGAVANKEE (243 aa). Over residues 995–1010 the composition is skewed to low complexity; it reads EARASSNSESALSSDS.

This sequence belongs to the constitutive coactivator of PPAR-gamma family.

The protein resides in the cytoplasm. Its subcellular location is the cell membrane. In terms of biological role, may bee involved in the oxidative stress-induced survival signaling. Binds RNA. May participate in mRNA transport in the cytoplasm. The polypeptide is Constitutive coactivator of PPAR-gamma-like protein 1 homolog (fam120a) (Xenopus tropicalis (Western clawed frog)).